Here is a 425-residue protein sequence, read N- to C-terminus: Adenylosuccinate synthetase (425 aa).

GTP contacts are provided by residues 12–18 (GDEGKAK) and 40–42 (GHT). Aspartate 13 acts as the Proton acceptor in catalysis. The Mg(2+) site is built by aspartate 13 and glycine 40. Residues 13 to 16 (DEGK), 38 to 41 (NAGH), threonine 130, arginine 144, glutamine 224, threonine 239, and arginine 303 each bind IMP. Catalysis depends on histidine 41, which acts as the Proton donor. A substrate-binding site is contributed by 299–305 (ATTGRPR). GTP contacts are provided by residues arginine 305, 331-333 (KID), and 411-413 (STG).

The protein belongs to the adenylosuccinate synthetase family. In terms of assembly, homodimer. Requires Mg(2+) as cofactor.

The protein resides in the cytoplasm. It catalyses the reaction IMP + L-aspartate + GTP = N(6)-(1,2-dicarboxyethyl)-AMP + GDP + phosphate + 2 H(+). It functions in the pathway purine metabolism; AMP biosynthesis via de novo pathway; AMP from IMP: step 1/2. Functionally, plays an important role in the de novo pathway of purine nucleotide biosynthesis. Catalyzes the first committed step in the biosynthesis of AMP from IMP. In Leptospira interrogans serogroup Icterohaemorrhagiae serovar copenhageni (strain Fiocruz L1-130), this protein is Adenylosuccinate synthetase.